We begin with the raw amino-acid sequence, 541 residues long: Glucans biosynthesis protein D (541 aa).

Residues Met-1–Ala-29 constitute a signal peptide (tat-type signal).

This sequence belongs to the OpgD/OpgG family. Post-translationally, predicted to be exported by the Tat system. The position of the signal peptide cleavage has not been experimentally proven.

Its subcellular location is the periplasm. Its pathway is glycan metabolism; osmoregulated periplasmic glucan (OPG) biosynthesis. Functionally, probably involved in the control of the structural glucose backbone of osmoregulated periplasmic glucans (OPGs). In Pseudomonas fluorescens (strain SBW25), this protein is Glucans biosynthesis protein D.